We begin with the raw amino-acid sequence, 226 residues long: Probable endonuclease LCL3 (226 aa).

The helical transmembrane segment at 15 to 32 threads the bilayer; sequence VFYTSILTGGILSSFYVY. One can recognise a TNase-like domain in the interval 53 to 212; it reads RTLFGRVTSV…RKKKIGMFQQ (160 aa). The active site involves Arg-103. Asp-108 serves as a coordination point for Ca(2+). Catalysis depends on residues Glu-111 and Arg-151.

This sequence belongs to the LCL3 family.

It is found in the mitochondrion. Its subcellular location is the membrane. This is Probable endonuclease LCL3 (LCL3) from Yarrowia lipolytica (strain CLIB 122 / E 150) (Yeast).